Here is a 739-residue protein sequence, read N- to C-terminus: Phosphoribosylformylglycinamidine synthase subunit PurL (739 aa).

H54 is a catalytic residue. 2 residues coordinate ATP: Y57 and K96. E98 lines the Mg(2+) pocket. Substrate contacts are provided by residues 99–102 (SHNH) and R121. The Proton acceptor role is filled by H100. D122 lines the Mg(2+) pocket. A substrate-binding site is contributed by Q245. D273 contributes to the Mg(2+) binding site. Residue 317-319 (ESQ) participates in substrate binding. Positions 500 and 537 each coordinate ATP. N538 serves as a coordination point for Mg(2+). S540 is a substrate binding site.

The protein belongs to the FGAMS family. As to quaternary structure, monomer. Part of the FGAM synthase complex composed of 1 PurL, 1 PurQ and 2 PurS subunits.

The protein resides in the cytoplasm. The catalysed reaction is N(2)-formyl-N(1)-(5-phospho-beta-D-ribosyl)glycinamide + L-glutamine + ATP + H2O = 2-formamido-N(1)-(5-O-phospho-beta-D-ribosyl)acetamidine + L-glutamate + ADP + phosphate + H(+). It participates in purine metabolism; IMP biosynthesis via de novo pathway; 5-amino-1-(5-phospho-D-ribosyl)imidazole from N(2)-formyl-N(1)-(5-phospho-D-ribosyl)glycinamide: step 1/2. Functionally, part of the phosphoribosylformylglycinamidine synthase complex involved in the purines biosynthetic pathway. Catalyzes the ATP-dependent conversion of formylglycinamide ribonucleotide (FGAR) and glutamine to yield formylglycinamidine ribonucleotide (FGAM) and glutamate. The FGAM synthase complex is composed of three subunits. PurQ produces an ammonia molecule by converting glutamine to glutamate. PurL transfers the ammonia molecule to FGAR to form FGAM in an ATP-dependent manner. PurS interacts with PurQ and PurL and is thought to assist in the transfer of the ammonia molecule from PurQ to PurL. This is Phosphoribosylformylglycinamidine synthase subunit PurL from Bacillus cereus (strain B4264).